The chain runs to 216 residues: MSTAQRRLPVYKKILEENKKKWMIKEFLEYRLAKYGYIDSEILKTPLGTRIVIYAERPSRIIGRKGAIVKEVSSILANKLGVENPQIDVIDVSKIEAPELFPKVVAYRIANAMARGVRFRRVMFVAVRQLMEAGAKGFEIVVSGKLSTERAKFEKITYGKLYKIGYDAKNRVRRAVVHVLLKPGIYGIEVRITPATLRYSDEYKIKPPTRPEAAAQ.

Residues 24-93 (IKEFLEYRLA…NPQIDVIDVS (70 aa)) form the KH type-2 domain.

The protein belongs to the universal ribosomal protein uS3 family. Part of the 30S ribosomal subunit.

Functionally, binds the lower part of the 30S subunit head. The polypeptide is Small ribosomal subunit protein uS3 (Pyrobaculum calidifontis (strain DSM 21063 / JCM 11548 / VA1)).